The sequence spans 141 residues: Hemoglobin subunit alpha (141 aa).

The Globin domain maps to 1–141; it reads VLSPADKNNV…VSTVLTSKYR (141 aa). A Phosphoserine modification is found at Ser3. An N6-succinyllysine mark is found at Lys7 and Lys11. Position 16 is an N6-acetyllysine; alternate (Lys16). Residue Lys16 is modified to N6-succinyllysine; alternate. Phosphotyrosine is present on Tyr24. Ser35 carries the phosphoserine modification. Lys40 carries the post-translational modification N6-succinyllysine. The residue at position 49 (Ser49) is a Phosphoserine. His58 is a binding site for O2. His87 is a heme b binding site. The residue at position 102 (Ser102) is a Phosphoserine. Position 108 is a phosphothreonine (Thr108). Residues Ser124 and Ser131 each carry the phosphoserine modification. Thr134 and Thr137 each carry phosphothreonine. Ser138 carries the phosphoserine modification.

Belongs to the globin family. Heterotetramer of two alpha chains and two beta chains. As to expression, red blood cells.

Functionally, involved in oxygen transport from the lung to the various peripheral tissues. In terms of biological role, hemopressin acts as an antagonist peptide of the cannabinoid receptor CNR1. Hemopressin-binding efficiently blocks cannabinoid receptor CNR1 and subsequent signaling. In Urocitellus townsendii (Townsend's ground squirrel), this protein is Hemoglobin subunit alpha (HBA).